A 121-amino-acid chain; its full sequence is Large ribosomal subunit protein uL18 (121 aa).

Belongs to the universal ribosomal protein uL18 family. As to quaternary structure, part of the 50S ribosomal subunit; part of the 5S rRNA/L5/L18/L25 subcomplex. Contacts the 5S and 23S rRNAs.

In terms of biological role, this is one of the proteins that bind and probably mediate the attachment of the 5S RNA into the large ribosomal subunit, where it forms part of the central protuberance. In Acidovorax ebreus (strain TPSY) (Diaphorobacter sp. (strain TPSY)), this protein is Large ribosomal subunit protein uL18.